The primary structure comprises 159 residues: Large ribosomal subunit protein uL22 (159 aa).

It belongs to the universal ribosomal protein uL22 family. As to quaternary structure, part of the 50S ribosomal subunit.

Its function is as follows. This protein binds specifically to 23S rRNA; its binding is stimulated by other ribosomal proteins, e.g. L4, L17, and L20. It is important during the early stages of 50S assembly. It makes multiple contacts with different domains of the 23S rRNA in the assembled 50S subunit and ribosome. In terms of biological role, the globular domain of the protein is located near the polypeptide exit tunnel on the outside of the subunit, while an extended beta-hairpin is found that lines the wall of the exit tunnel in the center of the 70S ribosome. This Thermotoga sp. (strain RQ2) protein is Large ribosomal subunit protein uL22.